Here is a 494-residue protein sequence, read N- to C-terminus: Transcription termination factor MTERF4, chloroplastic (494 aa).

The N-terminal 54 residues, 1 to 54 (MMKSLLFSAHPTSLLLPAPRLRRLLRLRAASSASASAPPRADRRSPGTPSRRPS), are a transit peptide targeting the chloroplast. Disordered stretches follow at residues 32 to 61 (SASA…YARP) and 457 to 494 (VEEM…EFVR). Residues 46 to 56 (PGTPSRRPSSS) show a composition bias toward low complexity. Composition is skewed to acidic residues over residues 457 to 466 (VEEMEREDSS) and 473 to 494 (DEVE…EFVR).

Belongs to the mTERF family.

The protein localises to the plastid. Its subcellular location is the chloroplast stroma. Functionally, transcription termination factor required for processing and steady-state levels of plastid transcripts. Required for splicing of the chloroplastic group II intron. Required for the accumulation of 16S and 23S ribosomes. The chain is Transcription termination factor MTERF4, chloroplastic from Zea mays (Maize).